The chain runs to 287 residues: Formamidopyrimidine-DNA glycosylase (287 aa).

Proline 2 acts as the Schiff-base intermediate with DNA in catalysis. Catalysis depends on glutamate 3, which acts as the Proton donor. The Proton donor; for beta-elimination activity role is filled by lysine 58. DNA is bound by residues histidine 104, arginine 123, and arginine 166. An FPG-type zinc finger spans residues arginine 251–valine 287. Arginine 277 acts as the Proton donor; for delta-elimination activity in catalysis.

Belongs to the FPG family. Monomer. It depends on Zn(2+) as a cofactor.

It carries out the reaction Hydrolysis of DNA containing ring-opened 7-methylguanine residues, releasing 2,6-diamino-4-hydroxy-5-(N-methyl)formamidopyrimidine.. It catalyses the reaction 2'-deoxyribonucleotide-(2'-deoxyribose 5'-phosphate)-2'-deoxyribonucleotide-DNA = a 3'-end 2'-deoxyribonucleotide-(2,3-dehydro-2,3-deoxyribose 5'-phosphate)-DNA + a 5'-end 5'-phospho-2'-deoxyribonucleoside-DNA + H(+). Involved in base excision repair of DNA damaged by oxidation or by mutagenic agents. Acts as a DNA glycosylase that recognizes and removes damaged bases. Has a preference for oxidized purines, such as 7,8-dihydro-8-oxoguanine (8-oxoG). Has AP (apurinic/apyrimidinic) lyase activity and introduces nicks in the DNA strand. Cleaves the DNA backbone by beta-delta elimination to generate a single-strand break at the site of the removed base with both 3'- and 5'-phosphates. The protein is Formamidopyrimidine-DNA glycosylase of Caulobacter sp. (strain K31).